We begin with the raw amino-acid sequence, 752 residues long: Granule-bound starch synthase 2, chloroplastic/amyloplastic (752 aa).

A chloroplast-targeting transit peptide spans 1-57 (MMLSLGSDATVLPFHAKNLKFTPKLSTLNGDLAFSKGLGVGRLNCGSVRLNHKQHVR). 2 disordered regions span residues 116 to 146 (LEGN…SGSA) and 224 to 253 (FENF…EKPP). Lys275 contacts ADP-alpha-D-glucose.

It belongs to the glycosyltransferase 1 family. Bacterial/plant glycogen synthase subfamily. Widely expressed.

Its subcellular location is the plastid. The protein resides in the chloroplast. It localises to the amyloplast. The catalysed reaction is [(1-&gt;4)-alpha-D-glucosyl](n) + ADP-alpha-D-glucose = [(1-&gt;4)-alpha-D-glucosyl](n+1) + ADP + H(+). The protein operates within glycan biosynthesis; starch biosynthesis. This Pisum sativum (Garden pea) protein is Granule-bound starch synthase 2, chloroplastic/amyloplastic.